The chain runs to 551 residues: Putative transport protein NTHI0043 (551 aa).

Transmembrane regions (helical) follow at residues 4 to 24 (IAITISLLALVAVIGLWIGHW), 28 to 48 (GVGLGIGGVLFGGIIVAHFTN), 65 to 85 (FGLILFVYTIGIQVGPGFFSS), 95 to 115 (AFAILIIVLGSIAVVLVHKIA), and 157 to 177 (VSYAMAYPFGICGILLAMWLI). 2 consecutive RCK C-terminal domains span residues 191–275 (RFNA…IIGY) and 277–360 (VDAP…VIGN). The next 6 membrane-spanning stretches (helical) occupy residues 370–390 (MLPVFIGIGLGVLVGSIPFYI), 402–424 (AGGPLVVALILARIGTIGKLYWF), 438–458 (IVLFLAVVGLKSGGSFFDTLV), 463–483 (LEWMGYGIFITFIPLMITGIL), 492–512 (YLTICGLLAGSMTDPPALAFA), and 529–549 (VYPLVMFLRIMSPQLLAVLLW).

This sequence belongs to the AAE transporter (TC 2.A.81) family. YidE subfamily.

The protein localises to the cell membrane. The sequence is that of Putative transport protein NTHI0043 from Haemophilus influenzae (strain 86-028NP).